The primary structure comprises 127 residues: UPF0102 protein SYNAS_23220 (127 aa).

It belongs to the UPF0102 family.

The sequence is that of UPF0102 protein SYNAS_23220 from Syntrophus aciditrophicus (strain SB).